We begin with the raw amino-acid sequence, 233 residues long: Glycolipid transfer protein 3 (233 aa).

A ganglioside GM3 (d18:1(4E))-binding residues include D79, N83, W126, and H165.

It belongs to the GLTP family.

In terms of biological role, may be involved in glycolipids transfer. The protein is Glycolipid transfer protein 3 of Arabidopsis thaliana (Mouse-ear cress).